Consider the following 380-residue polypeptide: Cytochrome b (380 aa).

4 helical membrane passes run 33–53, 77–98, 113–133, and 178–198; these read FGSLLGVCLIIQILTGLFLAM, WLIRYLHANGASMFFICLFIHV, WNIGIVLLLTTMATAFVGYVL, and FFAFHFILPFIITALVLVHLL. 2 residues coordinate heme b: His-83 and His-97. Positions 182 and 196 each coordinate heme b. His-201 lines the a ubiquinone pocket. Transmembrane regions (helical) follow at residues 226–246, 288–308, 320–340, and 347–367; these read IKDLLGVLLLLMVLTILVLFF, LGGVXALXLSILILXXXPLLN, ITQVLYWIFXXNLXXXXXXXX, and XXXXXQIASICYXAIIIIFMP.

This sequence belongs to the cytochrome b family. The cytochrome bc1 complex contains 11 subunits: 3 respiratory subunits (MT-CYB, CYC1 and UQCRFS1), 2 core proteins (UQCRC1 and UQCRC2) and 6 low-molecular weight proteins (UQCRH/QCR6, UQCRB/QCR7, UQCRQ/QCR8, UQCR10/QCR9, UQCR11/QCR10 and a cleavage product of UQCRFS1). This cytochrome bc1 complex then forms a dimer. The cofactor is heme b.

Its subcellular location is the mitochondrion inner membrane. Functionally, component of the ubiquinol-cytochrome c reductase complex (complex III or cytochrome b-c1 complex) that is part of the mitochondrial respiratory chain. The b-c1 complex mediates electron transfer from ubiquinol to cytochrome c. Contributes to the generation of a proton gradient across the mitochondrial membrane that is then used for ATP synthesis. This is Cytochrome b (MT-CYB) from Rhipidomys leucodactylus (White-footed climbing mouse).